The following is a 528-amino-acid chain: Probable serine/threonine-protein kinase DDB_G0282417 (528 aa).

The span at 49–77 shows a compositional bias: low complexity; that stretch reads NNNNNNNNNNNNNNNNNNNNNNNNNNKNN. The segment at 49-84 is disordered; it reads NNNNNNNNNNNNNNNNNNNNNNNNNNKNNNDGDDAA. One can recognise a Protein kinase domain in the interval 136–466; the sequence is QQNRVLIGEG…ESLINNHQYS (331 aa). Residues 142-150 and Lys-166 contribute to the ATP site; that span reads IGEGHYGKV. The active-site Proton acceptor is the Asp-266.

The protein belongs to the protein kinase superfamily. Ser/Thr protein kinase family.

It catalyses the reaction L-seryl-[protein] + ATP = O-phospho-L-seryl-[protein] + ADP + H(+). The enzyme catalyses L-threonyl-[protein] + ATP = O-phospho-L-threonyl-[protein] + ADP + H(+). The polypeptide is Probable serine/threonine-protein kinase DDB_G0282417 (Dictyostelium discoideum (Social amoeba)).